Consider the following 379-residue polypeptide: Carbamoyl phosphate synthase small chain (379 aa).

Residues 1-188 form a CPSase region; sequence MSTPAILALA…ELGKGFTQPE (188 aa). L-glutamine-binding residues include Ser47, Gly240, and Gly242. The region spanning 192–379 is the Glutamine amidotransferase type-1 domain; that stretch reads HVVAYDYGVK…FIELIEAAKK (188 aa). The active-site Nucleophile is the Cys269. The L-glutamine site is built by Leu270, Gln273, Asn311, Gly313, and Phe314. Residues His353 and Glu355 contribute to the active site.

The protein belongs to the CarA family. Composed of two chains; the small (or glutamine) chain promotes the hydrolysis of glutamine to ammonia, which is used by the large (or ammonia) chain to synthesize carbamoyl phosphate. Tetramer of heterodimers (alpha,beta)4.

The catalysed reaction is hydrogencarbonate + L-glutamine + 2 ATP + H2O = carbamoyl phosphate + L-glutamate + 2 ADP + phosphate + 2 H(+). It carries out the reaction L-glutamine + H2O = L-glutamate + NH4(+). The protein operates within amino-acid biosynthesis; L-arginine biosynthesis; carbamoyl phosphate from bicarbonate: step 1/1. It functions in the pathway pyrimidine metabolism; UMP biosynthesis via de novo pathway; (S)-dihydroorotate from bicarbonate: step 1/3. In terms of biological role, small subunit of the glutamine-dependent carbamoyl phosphate synthetase (CPSase). CPSase catalyzes the formation of carbamoyl phosphate from the ammonia moiety of glutamine, carbonate, and phosphate donated by ATP, constituting the first step of 2 biosynthetic pathways, one leading to arginine and/or urea and the other to pyrimidine nucleotides. The small subunit (glutamine amidotransferase) binds and cleaves glutamine to supply the large subunit with the substrate ammonia. The chain is Carbamoyl phosphate synthase small chain from Acinetobacter baylyi (strain ATCC 33305 / BD413 / ADP1).